Consider the following 887-residue polypeptide: MSRIIVKGLPVYLTDDNLREHFTKRLRQKHSHQAVNGSGPDLITDVKILRDRNGESRRFGFIGYRNEEDAFDAVEYFNGSFINTSKIEVSMAKSFADPRVPQPMKEKRREALKRFREKEEKLLQEENRKKKKVDENKHSNIDDEIRKNKQLQEFMETMKPSSQVTSWEKVGIDKSIEDEKLKREEEDSSVQGNSLLAHALALKEENNKDEAPNLVIENESDDEYSALNRNRDEDQEDAGEEEKMISISNLKDTDIGLVNDDANSDEKENEKRRNLAQDEKVSDLDWFKQRRVRIKESEAETREKSSSYATEQNESLDTKKEEQPERAVPQKTDEELAIEKINQTGRLFLRNILYTSKEEDFRKLFSPFGELEEVHVALDTRTGQSKGFAYVLFKDSKNAVNAYVELDKQIFQGRLLHILPGEEKKSHRLDEFDLKNMPLKKQKELKRKAAASRQTFSWNSLYMNQDAVLGSVAAKLGLEKSQLIDAENSSSAVKQALAEAHVIGDVRKYFESKGVDLTKFSQLKSTNQRDDKVILVKNFPFGTTREELGEMFLPYGKLERLLMPPAGTIAIVQFRDTTSARAAFTKLSYKRFKDGIIYLERGPKDCFTKPAEADDLINNTSAKEEENPVEVKPSSNDLMEANKDVTEGSSNAHDEDVIDGPTVSIFIKNLNFSTTNQNLTDRFKVFTGFVVAQVKTKPDPKHQGKTLSMGFGFVEFRTKEQANAVIAAMDGTVIDGHKIQLKLSHRQASQSGNTKTKSNKKSGKIIVKNLPFEATRKDVFELFNSFGQLKSVRVPKKFDKSARGFAFVEFLLPKEAENAMDQLHGVHLLGRRLVMQYAEEDAVDAEEEIARMTKKVRKQVATNEMAALRNGGGRKKLDVDDEENEGF.

Residues 2–94 (SRIIVKGLPV…SKIEVSMAKS (93 aa)) form the RRM 1 domain. Disordered regions lie at residues 121–143 (KLLQ…NIDD), 203–276 (KEEN…RNLA), and 297–336 (SEAE…DEEL). Ser220 and Ser264 each carry phosphoserine. A compositionally biased stretch (basic and acidic residues) spans 264–276 (SDEKENEKRRNLA). Over residues 306-315 (SSYATEQNES) the composition is skewed to polar residues. The span at 316–325 (LDTKKEEQPE) shows a compositional bias: basic and acidic residues. RRM domains are found at residues 345 to 423 (GRLF…PGEE), 532 to 604 (KVIL…RGPK), 663 to 746 (VSIF…LSHR), and 763 to 840 (GKII…YAEE). The tract at residues 864–887 (EMAALRNGGGRKKLDVDDEENEGF) is disordered.

The protein belongs to the RRM MRD1 family. Interacts with NOP1. Binds to the 35S pre-rRNA and the U3 snoRNA.

Its subcellular location is the nucleus. Involved in pre-rRNA processing. Required for maintaining steady-state levels of 40S ribosomal subunit. Required for the initial processing of pre-rRNA at the A0 to A2 sites, leading to the processing of the 23S pre-rRNA intermediate to the 18S rRNA. In Saccharomyces cerevisiae (strain ATCC 204508 / S288c) (Baker's yeast), this protein is Multiple RNA-binding domain-containing protein 1 (MRD1).